The chain runs to 151 residues: Large ribosomal subunit protein bL9 (151 aa).

The protein belongs to the bacterial ribosomal protein bL9 family.

In terms of biological role, binds to the 23S rRNA. This Chlorobium limicola (strain DSM 245 / NBRC 103803 / 6330) protein is Large ribosomal subunit protein bL9.